The sequence spans 219 residues: uncharacterized protein (219 aa).

This is an uncharacterized protein from Methanocaldococcus jannaschii (strain ATCC 43067 / DSM 2661 / JAL-1 / JCM 10045 / NBRC 100440) (Methanococcus jannaschii).